The following is a 400-amino-acid chain: Chorismate synthase (400 aa).

Residues R40 and R46 each coordinate NADP(+). Residues 135-137 (RAS), 257-258 (QA), G301, 316-320 (KPIST), and R342 each bind FMN.

It belongs to the chorismate synthase family. In terms of assembly, homotetramer. Requires FMNH2 as cofactor.

The catalysed reaction is 5-O-(1-carboxyvinyl)-3-phosphoshikimate = chorismate + phosphate. It participates in metabolic intermediate biosynthesis; chorismate biosynthesis; chorismate from D-erythrose 4-phosphate and phosphoenolpyruvate: step 7/7. Catalyzes the anti-1,4-elimination of the C-3 phosphate and the C-6 proR hydrogen from 5-enolpyruvylshikimate-3-phosphate (EPSP) to yield chorismate, which is the branch point compound that serves as the starting substrate for the three terminal pathways of aromatic amino acid biosynthesis. This reaction introduces a second double bond into the aromatic ring system. The polypeptide is Chorismate synthase (Tropheryma whipplei (strain TW08/27) (Whipple's bacillus)).